A 238-amino-acid polypeptide reads, in one-letter code: Zwei Ig domain protein zig-2 (238 aa).

A signal peptide spans 1–17 (MLKFTAISFVLLNAAES). The region spanning 31–130 (PLLKFTRTPN…NGLTKLEHVA (100 aa)) is the Ig-like C2-type 1 domain. N-linked (GlcNAc...) asparagine glycosylation is found at Asn-40 and Asn-43. A disulfide bridge links Cys-54 with Cys-117. Residues Asn-137, Asn-206, and Asn-216 are each glycosylated (N-linked (GlcNAc...) asparagine). Positions 149–230 (PFISMTVDFR…NHFGETTAIT (82 aa)) constitute an Ig-like C2-type 2 domain. Cysteines 170 and 217 form a disulfide.

As to expression, expressed in PVT neurons and weakly in some head neurons.

Its subcellular location is the secreted. Probably not involved in maintaining the position of ASI and ASH head neuron cell bodies and ventral nerve cord axons of PVQ, PVP, RMEV, AVK and HSN neurons. The chain is Zwei Ig domain protein zig-2 from Caenorhabditis elegans.